Consider the following 212-residue polypeptide: Orotate phosphoribosyltransferase (212 aa).

Residues Arg97, Lys101, His103, and 123 to 131 each bind 5-phospho-alpha-D-ribose 1-diphosphate; that span reads EDLISTGGS. Ser127 contacts orotate.

The protein belongs to the purine/pyrimidine phosphoribosyltransferase family. PyrE subfamily. As to quaternary structure, homodimer. Requires Mg(2+) as cofactor.

It catalyses the reaction orotidine 5'-phosphate + diphosphate = orotate + 5-phospho-alpha-D-ribose 1-diphosphate. It functions in the pathway pyrimidine metabolism; UMP biosynthesis via de novo pathway; UMP from orotate: step 1/2. Its function is as follows. Catalyzes the transfer of a ribosyl phosphate group from 5-phosphoribose 1-diphosphate to orotate, leading to the formation of orotidine monophosphate (OMP). This is Orotate phosphoribosyltransferase from Bacteroides fragilis (strain ATCC 25285 / DSM 2151 / CCUG 4856 / JCM 11019 / LMG 10263 / NCTC 9343 / Onslow / VPI 2553 / EN-2).